The following is a 79-amino-acid chain: CDC42 small effector protein 1 (79 aa).

Residues cysteine 10 and cysteine 11 are each lipidated (S-palmitoyl cysteine). The region spanning 30–43 (IGEPMNFVHLTHIG) is the CRIB domain. A disordered region spans residues 41–79 (HIGSGDMGASDGLPRAGGVQEQMRSKCGRDRQWSNSGVL). Basic and acidic residues predominate over residues 63–72 (MRSKCGRDRQ).

It belongs to the CDC42SE/SPEC family.

It localises to the cytoplasm. It is found in the cytoskeleton. Its subcellular location is the cell membrane. Its function is as follows. Probably involved in the organization of the actin cytoskeleton by acting downstream of CDC42, inducing actin filament assembly. This is CDC42 small effector protein 1 (cdc42se1) from Xenopus tropicalis (Western clawed frog).